Reading from the N-terminus, the 277-residue chain is Putative pyruvate, phosphate dikinase regulatory protein (277 aa).

Residue 151 to 158 (GISRTSKT) participates in ADP binding.

Belongs to the pyruvate, phosphate/water dikinase regulatory protein family. PDRP subfamily.

It carries out the reaction N(tele)-phospho-L-histidyl/L-threonyl-[pyruvate, phosphate dikinase] + ADP = N(tele)-phospho-L-histidyl/O-phospho-L-threonyl-[pyruvate, phosphate dikinase] + AMP + H(+). The enzyme catalyses N(tele)-phospho-L-histidyl/O-phospho-L-threonyl-[pyruvate, phosphate dikinase] + phosphate + H(+) = N(tele)-phospho-L-histidyl/L-threonyl-[pyruvate, phosphate dikinase] + diphosphate. Bifunctional serine/threonine kinase and phosphorylase involved in the regulation of the pyruvate, phosphate dikinase (PPDK) by catalyzing its phosphorylation/dephosphorylation. The protein is Putative pyruvate, phosphate dikinase regulatory protein of Alkaliphilus metalliredigens (strain QYMF).